Consider the following 108-residue polypeptide: Biogenesis of lysosome-related organelles complex 1 subunit CNL1 (108 aa).

It belongs to the BLOC1S4 family. As to quaternary structure, component of the biogenesis of lysosome-related organelles complex-1 (BLOC-1).

Its subcellular location is the cytoplasm. Functionally, component of the biogenesis of lysosome-related organelles complex-1 (BLOC-1), a complex that is involved in endosomal cargo sorting. The sequence is that of Biogenesis of lysosome-related organelles complex 1 subunit CNL1 (CLN1) from Zygosaccharomyces rouxii (strain ATCC 2623 / CBS 732 / NBRC 1130 / NCYC 568 / NRRL Y-229).